The sequence spans 207 residues: MSPLLRRLLLAVLLQLAPAQAPVSQPDAPGHQKKVVSWIDVYARATCQPREVVVPLNMELMGTVAKQLVPSCVTVQRCGGCCPDDGLECVPTGQHQVRMQILMIQYPSSQLGEMSLEEHSQCECRPKKRESAVKPDRASTPHHRPQPRSVPGWDPAPGAPSPADITHPTPAPGPSAHAAPSAASALTPGPATAAADAAASSVVKGGA.

The N-terminal stretch at 1–21 (MSPLLRRLLLAVLLQLAPAQA) is a signal peptide. 3 cysteine pairs are disulfide-bonded: C47-C89, C78-C122, and C82-C124. Basic and acidic residues predominate over residues 124 to 139 (CRPKKRESAVKPDRAS). Residues 124 to 207 (CRPKKRESAV…AASSVVKGGA (84 aa)) are disordered. A compositionally biased stretch (low complexity) spans 174 to 201 (PSAHAAPSAASALTPGPATAAADAAASS).

The protein belongs to the PDGF/VEGF growth factor family. Homodimer; disulfide-linked. Can also form heterodimer with VEGF. VEGF-B186 is O-glycosylated.

It localises to the secreted. In terms of biological role, growth factor for endothelial cells. VEGF-B167 binds heparin and neuropilin-1 whereas the binding to neuropilin-1 of VEGF-B186 is regulated by proteolysis. This chain is Vascular endothelial growth factor B (VEGFB), found in Bos taurus (Bovine).